Here is a 648-residue protein sequence, read N- to C-terminus: Serine/threonine-protein phosphatase 1 regulatory subunit PIG1 (648 aa).

The segment covering Ser20–Ser51 has biased composition (low complexity). The segment at Ser20–Gly52 is disordered. The CBM21 domain occupies His201 to Thr331. Over residues Arg593–Leu609 the composition is skewed to polar residues. A disordered region spans residues Arg593–Ser629.

Functionally, regulates the activity of glycogen synthase. It is most probably a regulatory subunit for protein phosphatase type 1. The protein is Serine/threonine-protein phosphatase 1 regulatory subunit PIG1 (PIG1) of Saccharomyces cerevisiae (strain ATCC 204508 / S288c) (Baker's yeast).